A 662-amino-acid chain; its full sequence is uncharacterized protein (662 aa).

Residues Ser145, Glu164, Trp173, Asp184, and Tyr190 each coordinate FAD. The interval 638–662 (SRLETSGVPREGVQRPGSRLRRRPS) is disordered.

Belongs to the FAD-binding monooxygenase family. Requires FAD as cofactor.

This is an uncharacterized protein from Sinorhizobium fredii (strain NBRC 101917 / NGR234).